We begin with the raw amino-acid sequence, 1451 residues long: Cleavage and polyadenylation specificity factor subunit 1 (1451 aa).

2 stretches are compositionally biased toward basic and acidic residues: residues 401 to 422 (QETP…EPPN) and 561 to 572 (EEKREPTIEDDK). 3 disordered regions span residues 401-432 (QETP…SNWA), 548-572 (EKPS…EDDK), and 753-789 (GESN…RQEP). Residues 901–916 (KKMPHNINYREKKVKV) carry the Nuclear localization signal motif.

This sequence belongs to the CPSF1 family.

The protein resides in the nucleus. It localises to the nucleoplasm. Its function is as follows. Component of the cleavage and polyadenylation specificity factor (CPSF) complex that plays a key role in pre-mRNA 3'-end formation, recognizing the AAUAAA signal sequence and interacting with poly(A) polymerase and other factors to bring about cleavage and poly(A) addition. This subunit is involved in the RNA recognition step of the polyadenylation reaction. Plays a role in eye morphogenesis and the development of retinal ganglion cell projections to the tectum. This is Cleavage and polyadenylation specificity factor subunit 1 (cpsf1) from Danio rerio (Zebrafish).